A 104-amino-acid polypeptide reads, in one-letter code: MATTLYTNKVWCVYILRQDNGKLYTGITSNLNRRIKQHSNKQGAKCLRNATNLRLVYHSASAYDYNTAARMEYNLKRKCSKYFKLRLIKAKPLLLHKFLLANKL.

The region spanning 9 to 89 (KVWCVYILRQ…SKYFKLRLIK (81 aa)) is the GIY-YIG domain.

The protein belongs to the UPF0213 family.

In Autographa californica nuclear polyhedrosis virus (AcMNPV), this protein is UPF0213 protein in VLF1-GP41 intergenic region.